Reading from the N-terminus, the 355-residue chain is Methionine import ATP-binding protein MetN (355 aa).

Positions leucine 8 to isoleucine 250 constitute an ABC transporter domain. Glycine 42 to serine 49 serves as a coordination point for ATP.

Belongs to the ABC transporter superfamily. Methionine importer (TC 3.A.1.24) family. In terms of assembly, the complex is composed of two ATP-binding proteins (MetN), two transmembrane proteins (MetI) and a solute-binding protein (MetQ).

The protein localises to the cell membrane. The enzyme catalyses L-methionine(out) + ATP + H2O = L-methionine(in) + ADP + phosphate + H(+). It catalyses the reaction D-methionine(out) + ATP + H2O = D-methionine(in) + ADP + phosphate + H(+). Its function is as follows. Part of the ABC transporter complex MetNIQ involved in methionine import. Responsible for energy coupling to the transport system. This chain is Methionine import ATP-binding protein MetN, found in Streptococcus thermophilus (strain CNRZ 1066).